The following is a 772-amino-acid chain: NAD(P)H-quinone oxidoreductase subunit 5, chloroplastic (772 aa).

16 helical membrane passes run 9-29 (WIIP…LLLF), 40-60 (WSFP…YLSI), 89-109 (IDPL…LVLF), 125-145 (FAYL…SNLI), 147-167 (IYIF…FWFT), 185-205 (GDFG…SFEF), 220-240 (NQVH…GAVA), 259-279 (TPIS…FLVA), 290-312 (YIMN…LALA), 328-348 (LGYM…FHLI), 355-375 (ALLF…VGYS), 397-417 (TAFL…CFWS), 426-446 (WLYS…TAFY), 550-570 (LFSL…GIPF), 604-624 (FVTN…IATF), and 731-751 (IFIF…FFVL).

Belongs to the complex I subunit 5 family. As to quaternary structure, NDH is composed of at least 16 different subunits, 5 of which are encoded in the nucleus.

The protein localises to the plastid. The protein resides in the chloroplast thylakoid membrane. It carries out the reaction a plastoquinone + NADH + (n+1) H(+)(in) = a plastoquinol + NAD(+) + n H(+)(out). It catalyses the reaction a plastoquinone + NADPH + (n+1) H(+)(in) = a plastoquinol + NADP(+) + n H(+)(out). In terms of biological role, NDH shuttles electrons from NAD(P)H:plastoquinone, via FMN and iron-sulfur (Fe-S) centers, to quinones in the photosynthetic chain and possibly in a chloroplast respiratory chain. The immediate electron acceptor for the enzyme in this species is believed to be plastoquinone. Couples the redox reaction to proton translocation, and thus conserves the redox energy in a proton gradient. The chain is NAD(P)H-quinone oxidoreductase subunit 5, chloroplastic (ndhF) from Oenothera argillicola (Appalachian evening primrose).